Here is a 203-residue protein sequence, read N- to C-terminus: Small ribosomal subunit protein uS4 (203 aa).

The S4 RNA-binding domain maps to 92-164; that stretch reads TRLDSVVYLL…LEENRIRNVP (73 aa).

This sequence belongs to the universal ribosomal protein uS4 family. Part of the 30S ribosomal subunit. Contacts protein S5. The interaction surface between S4 and S5 is involved in control of translational fidelity.

Its function is as follows. One of the primary rRNA binding proteins, it binds directly to 16S rRNA where it nucleates assembly of the body of the 30S subunit. Functionally, with S5 and S12 plays an important role in translational accuracy. The sequence is that of Small ribosomal subunit protein uS4 from Opitutus terrae (strain DSM 11246 / JCM 15787 / PB90-1).